The primary structure comprises 199 residues: Chromophore lyase CpcT/CpeT (199 aa).

This sequence belongs to the CpcT/CpeT biliprotein lyase family.

Functionally, covalently attaches a chromophore to Cys residue(s) of phycobiliproteins. The sequence is that of Chromophore lyase CpcT/CpeT from Prochlorococcus marinus (strain NATL1A).